The primary structure comprises 243 residues: Tetraspanin-36 (243 aa).

Residues 1–9 (MDCGIITSK) lie on the Cytoplasmic side of the membrane. A helical membrane pass occupies residues 10-30 (TILLLLSLIFWAAGAALAYVG). At 31-49 (SYVIKSYNNFEDFMSDRHT) the chain is on the lumenal side. Residues 50-70 (LIPAAIIIGVAVVMFIIGFVG) traverse the membrane as a helical segment. Topologically, residues 71 to 84 (CCATLRESKVGLGL) are cytoplasmic. The helical transmembrane segment at 85 to 105 (FLIIIMLIFAAEVTAFVFGII) threads the bilayer. Residues 106–208 (YRGRIRGDLE…QVLQDVLSYA (103 aa)) are Lumenal-facing. Residues Asn-149, Asn-163, and Asn-174 are each glycosylated (N-linked (GlcNAc...) asparagine). The chain crosses the membrane as a helical span at residues 209 to 229 (MLVILGFAIIKFFGMLSVCVI). The Cytoplasmic portion of the chain corresponds to 230 to 243 (TCKSKKNEYQPLYA).

This sequence belongs to the tetraspanin (TM4SF) family. Post-translationally, N-glycosylated. Strongly expressed in melanophores and xanthophores. Also detected in eye, brain, heart, skin, fin, testis and ovary.

Its subcellular location is the golgi apparatus membrane. It localises to the endoplasmic reticulum membrane. Its function is as follows. Plays a role in migration and segregation of pigment cells (melanophores and xanthophores). Contributes to pigment stripe patterning in the epidermis. This chain is Tetraspanin-36, found in Danio rerio (Zebrafish).